The following is a 162-amino-acid chain: MERFIENAMYASRWLLAPIYFGLSLGLLALALKFFQEVIHLLPSVFSMAESELILVLLSLIDMALVGGLLVMVMISGYENFVSQLDIDDNKEKLNWLGTMDSSSLKMKVAASIVAISSIHLLRIFMDAKNVDPQHLMWYVIIHMTFVVSAFAMGYLDKVTKH.

A run of 3 helical transmembrane segments spans residues 15 to 35, 53 to 73, and 136 to 156; these read LLAPIYFGLSLGLLALALKFF, LILVLLSLIDMALVGGLLVMV, and LMWYVIIHMTFVVSAFAMGYL.

The protein belongs to the UPF0114 family.

It localises to the cell membrane. The polypeptide is UPF0114 protein PFLU_5318 (Pseudomonas fluorescens (strain SBW25)).